Reading from the N-terminus, the 293-residue chain is Bifunctional protein FolD (293 aa).

NADP(+) contacts are provided by residues Gly164–Ser166, Ser193, and Thr234.

The protein belongs to the tetrahydrofolate dehydrogenase/cyclohydrolase family. Homodimer.

It carries out the reaction (6R)-5,10-methylene-5,6,7,8-tetrahydrofolate + NADP(+) = (6R)-5,10-methenyltetrahydrofolate + NADPH. The catalysed reaction is (6R)-5,10-methenyltetrahydrofolate + H2O = (6R)-10-formyltetrahydrofolate + H(+). It functions in the pathway one-carbon metabolism; tetrahydrofolate interconversion. In terms of biological role, catalyzes the oxidation of 5,10-methylenetetrahydrofolate to 5,10-methenyltetrahydrofolate and then the hydrolysis of 5,10-methenyltetrahydrofolate to 10-formyltetrahydrofolate. The polypeptide is Bifunctional protein FolD (Bacteroides thetaiotaomicron (strain ATCC 29148 / DSM 2079 / JCM 5827 / CCUG 10774 / NCTC 10582 / VPI-5482 / E50)).